The chain runs to 296 residues: Tubulin polyglutamylase complex subunit 2 (296 aa).

The segment at 257–296 (KILIPKKKGPVQPVSGQKGPGPLAPPTSKPSAGCGNPVRK) is disordered.

As to quaternary structure, part of the neuronal tubulin polyglutamylase complex which contains TPGS1, TPGS2, TTLL1, LRRC49 and NICN1. Interacts with CSTPP1 and LRRC49.

The protein resides in the cytoplasm. It localises to the cytoskeleton. It is found in the microtubule organizing center. Its subcellular location is the centrosome. The protein localises to the centriolar satellite. In terms of biological role, subunit of the tubulin polyglutamylase complex (TPGC). The complex mediates cilia and flagella polyglutamylation which is essential for their biogenesis and motility. The chain is Tubulin polyglutamylase complex subunit 2 (Tpgs2) from Rattus norvegicus (Rat).